The following is a 257-amino-acid chain: Ribosome-inactivating protein charybdin (257 aa).

Glu-167 is an active-site residue. An intrachain disulfide couples Cys-217 to Cys-254.

It belongs to the ribosome-inactivating protein family. Type 1 RIP subfamily.

It catalyses the reaction Endohydrolysis of the N-glycosidic bond at one specific adenosine on the 28S rRNA.. Functionally, inhibits translation in rabbit reticulocytes. This Drimia maritima (Sea squill) protein is Ribosome-inactivating protein charybdin.